The following is a 74-amino-acid chain: ATP synthase subunit 9, mitochondrial (74 aa).

The next 2 helical transmembrane spans lie at 12-32 (LATI…AALI) and 50-70 (ILGF…AFLL).

The protein belongs to the ATPase C chain family. F-type ATPases have 2 components, CF(1) - the catalytic core - and CF(0) - the membrane proton channel. CF(1) has five subunits: alpha(3), beta(3), gamma(1), delta(1), epsilon(1). CF(0) has three main subunits: a, b and c.

It is found in the mitochondrion membrane. Functionally, mitochondrial membrane ATP synthase (F(1)F(0) ATP synthase or Complex V) produces ATP from ADP in the presence of a proton gradient across the membrane which is generated by electron transport complexes of the respiratory chain. F-type ATPases consist of two structural domains, F(1) - containing the extramembraneous catalytic core and F(0) - containing the membrane proton channel, linked together by a central stalk and a peripheral stalk. During catalysis, ATP synthesis in the catalytic domain of F(1) is coupled via a rotary mechanism of the central stalk subunits to proton translocation. Part of the complex F(0) domain. A homomeric c-ring of probably 10 subunits is part of the complex rotary element. In Rhizopus oryzae (Mucormycosis agent), this protein is ATP synthase subunit 9, mitochondrial.